Reading from the N-terminus, the 925-residue chain is Calpain-B (925 aa).

The 300-residue stretch at 259 to 558 (MFEDPDFPAT…FDRVEICNLS (300 aa)) folds into the Calpain catalytic domain. Active-site residues include Cys-314, His-470, and Asn-498. The segment at 559 to 728 (PDSLTEDQQH…TRNNMEENDD (170 aa)) is domain III. The segment at 723-753 (MEENDDEVGFGETDDRIAPSLPPPTPKEEDD) is disordered. Positions 729 to 748 (EVGFGETDDRIAPSLPPPTP) are linker. A domain IV region spans residues 749-925 (KEEDDPQRIA…DDWLERTIYS (177 aa)). 2 EF-hand domains span residues 796–831 (FSKD…IAKW) and 826–861 (TDIA…AGYH). Ca(2+)-binding residues include Asp-809, Asp-811, Ser-813, Arg-815, Glu-820, Asp-839, Thr-843, Ser-845, and His-850.

The protein belongs to the peptidase C2 family. In terms of processing, undergoes calcium-dependent autolytic cleavage between Asn-74 and Ala-75 and between Gln-224 and Asn-225 to produce two major products, calpain B catalytic subunit 1 and calpain B catalytic subunit 2. This autolysis is necessary for activation of the protein. In terms of tissue distribution, strongly expressed in follicular and border cells of the oocyte. Ubiquitously expressed in early embryos. Localized to the trachea and their orifices, and to the larynx of late embryos. Restricted to the salivary gland in third instar larvae.

It localises to the cytoplasm. The protein localises to the membrane. With respect to regulation, activated by millimolar concentrations of calcium. Its function is as follows. Calcium-regulated non-lysosomal thiol-protease. This Drosophila melanogaster (Fruit fly) protein is Calpain-B.